A 388-amino-acid chain; its full sequence is Beta-1,4-galactosyltransferase 5 (388 aa).

Over 1–14 the chain is Cytoplasmic; that stretch reads MRARRGLLRLPRRS. A helical; Signal-anchor for type II membrane protein transmembrane segment spans residues 15 to 35; that stretch reads LLAALFFFSLSSSLLYFVYVA. Residues 36–388 lie on the Lumenal side of the membrane; the sequence is PGIVNTYLFM…TPELAQVTEY (353 aa). 4 N-linked (GlcNAc...) asparagine glycosylation sites follow: Asn77, Asn81, Asn90, and Asn128. Cys114 and Cys158 are oxidised to a cystine. Residues 169–173, 208–210, 235–236, Tyr264, and Trp296 contribute to the UDP-alpha-D-galactose site; these read PFRNR, FNR, and VD. A disulfide bond links Cys229 and Cys248. Asp236 provides a ligand contact to Mn(2+). 298–301 is a binding site for N-acetyl-D-glucosamine; that stretch reads GEDD. His329 is a Mn(2+) binding site. Residue 329-330 participates in UDP-alpha-D-galactose binding; the sequence is HH. Residue Arg340 participates in N-acetyl-D-glucosamine binding. N-linked (GlcNAc...) asparagine glycans are attached at residues Asn360, Asn364, and Asn373.

Belongs to the glycosyltransferase 7 family. Mn(2+) is required as a cofactor. In terms of tissue distribution, highest levels in heart, brain, liver and kidney with lower levels in spleen, lung and testis.

The protein localises to the golgi apparatus. Its subcellular location is the golgi stack membrane. The catalysed reaction is a beta-D-glucosyl-(1&lt;-&gt;1')-N-acylsphing-4-enine + UDP-alpha-D-galactose = a beta-D-Gal-(1-&gt;4)-beta-D-Glc-(1&lt;-&gt;1)-Cer(d18:1(4E)) + UDP + H(+). The protein operates within protein modification; protein glycosylation. It participates in sphingolipid metabolism. Catalyzes the synthesis of lactosylceramide (LacCer) via the transfer of galactose from UDP-galactose to glucosylceramide (GlcCer). LacCer is the starting point in the biosynthesis of all gangliosides (membrane-bound glycosphingolipids) which play pivotal roles in the CNS including neuronal maturation and axonal and myelin formation. Plays a role in the glycosylation of BMPR1A and regulation of its protein stability. Essential for extraembryonic development during early embryogenesis. The sequence is that of Beta-1,4-galactosyltransferase 5 from Mus musculus (Mouse).